We begin with the raw amino-acid sequence, 405 residues long: Argininosuccinate synthase (405 aa).

ATP is bound by residues 10–18 (AYSGGLDTS) and alanine 37. Residues tyrosine 88 and serine 93 each contribute to the L-citrulline site. Glycine 118 serves as a coordination point for ATP. Residues threonine 120, asparagine 124, and aspartate 125 each coordinate L-aspartate. L-citrulline is bound at residue asparagine 124. L-citrulline-binding residues include arginine 128, serine 179, serine 188, glutamate 264, and tyrosine 276.

This sequence belongs to the argininosuccinate synthase family. Type 1 subfamily. As to quaternary structure, homotetramer.

The protein localises to the cytoplasm. The enzyme catalyses L-citrulline + L-aspartate + ATP = 2-(N(omega)-L-arginino)succinate + AMP + diphosphate + H(+). It participates in amino-acid biosynthesis; L-arginine biosynthesis; L-arginine from L-ornithine and carbamoyl phosphate: step 2/3. The sequence is that of Argininosuccinate synthase from Pseudomonas fluorescens (strain Pf0-1).